An 81-amino-acid polypeptide reads, in one-letter code: Small ribosomal subunit protein bS16 (81 aa).

The protein belongs to the bacterial ribosomal protein bS16 family.

This is Small ribosomal subunit protein bS16 from Nautilia profundicola (strain ATCC BAA-1463 / DSM 18972 / AmH).